A 644-amino-acid polypeptide reads, in one-letter code: Biosynthetic arginine decarboxylase (644 aa).

Lysine 105 carries the post-translational modification N6-(pyridoxal phosphate)lysine. Residue 287–297 participates in substrate binding; the sequence is LDVGGGLGIDY.

It belongs to the Orn/Lys/Arg decarboxylase class-II family. SpeA subfamily. The cofactor is Mg(2+). Pyridoxal 5'-phosphate serves as cofactor.

The enzyme catalyses L-arginine + H(+) = agmatine + CO2. Functionally, catalyzes the biosynthesis of agmatine from arginine. The protein is Biosynthetic arginine decarboxylase of Parasynechococcus marenigrum (strain WH8102).